Here is a 204-residue protein sequence, read N- to C-terminus: Large ribosomal subunit protein eL15 (204 aa).

Belongs to the eukaryotic ribosomal protein eL15 family. Component of the large ribosomal subunit.

It is found in the cytoplasm. Component of the large ribosomal subunit. The ribosome is a large ribonucleoprotein complex responsible for the synthesis of proteins in the cell. The protein is Large ribosomal subunit protein eL15 (rpl15) of Monopterus albus (Swamp eel).